We begin with the raw amino-acid sequence, 368 residues long: MRTLHVDLGERSYPIYIGENLLGDARWFAPHIVGRRVAVISNETVAPLYLETLLKALQGHEVTPVVLPDGEAYKQWETLQLIFDALLKERHDRKTTLIALGGGVIGDMAGFAAACYQRGVNFIQVPTTLLSQVDSSVGGKTGINHPLGKNMIGAFYQPQAVVIDTASLKTLPSRELSAGLAEVIKYGFICDEPFITWLEEHMDALLALEPTVVTEAIERSCAAKARVVGADERELGVRATLNLGHTFGHAIETQQGYGVWLHGEAVGAGTVMALEMSHRLGWLSAAERDRGTRLLRRAGLPVVPPAEMTAEDFMEHMAVDKKVLDGRLRLVLLQGLGNAVVTGDFPREILDATLRTDYRALADQLGDE.

Residues 69-74 (DGEAYK), 103-107 (GVIGD), 127-128 (TT), K140, and K149 each bind NAD(+). Residues E182, H245, and H262 each coordinate Zn(2+).

This sequence belongs to the sugar phosphate cyclases superfamily. Dehydroquinate synthase family. It depends on Co(2+) as a cofactor. The cofactor is Zn(2+). NAD(+) is required as a cofactor.

It is found in the cytoplasm. It catalyses the reaction 7-phospho-2-dehydro-3-deoxy-D-arabino-heptonate = 3-dehydroquinate + phosphate. Its pathway is metabolic intermediate biosynthesis; chorismate biosynthesis; chorismate from D-erythrose 4-phosphate and phosphoenolpyruvate: step 2/7. Its function is as follows. Catalyzes the conversion of 3-deoxy-D-arabino-heptulosonate 7-phosphate (DAHP) to dehydroquinate (DHQ). The protein is 3-dehydroquinate synthase of Pseudomonas aeruginosa (strain LESB58).